The chain runs to 445 residues: Crotonyl-CoA reductase (445 aa).

Zn(2+) is bound at residue Glu149.

Belongs to the zinc-containing alcohol dehydrogenase family. Crotonyl-CoA carboxylase/reductase subfamily. As to quaternary structure, homodimer. Zn(2+) serves as cofactor.

The enzyme catalyses butanoyl-CoA + NADP(+) = (2E)-butenoyl-CoA + NADPH + H(+). With respect to regulation, inhibited by NADPH at concentrations above 200 uM, by MgCl (30%), by ZnCl(2) (55%), and by CoCl, MnCl and CaCl (100%). Also inhibited by iodoacetamide, N-ethylmaleamide, the thiol group inhibitor beta-chloromercuribenzoate, palmitoyl-CoA and myristoyl-CoA. Catalyzes the conversion of crotonyl-CoA to butyryl-CoA. It uses only NADP as electron donor. May have a role in providing butyryl-CoA as a starter unit for straight-chain fatty acid biosynthesis. The protein is Crotonyl-CoA reductase (ccrA2) of Streptomyces avermitilis (strain ATCC 31267 / DSM 46492 / JCM 5070 / NBRC 14893 / NCIMB 12804 / NRRL 8165 / MA-4680).